Consider the following 390-residue polypeptide: Manganese peroxidase 2 (390 aa).

A signal peptide spans 1 to 23 (MAFNFAAILAFVSLAAVTSAAPS). Cystine bridges form between Cys27/Cys39, Cys38/Cys313, Cys57/Cys141, Cys277/Cys343, and Cys365/Cys372. Mn(2+)-binding residues include Glu59 and Glu63. His70 functions as the Proton acceptor in the catalytic mechanism. Ca(2+) is bound by residues Asp71, Gly86, Asp88, and Ser90. Asn155 is a glycosylation site (N-linked (GlcNAc...) asparagine). His197 provides a ligand contact to heme b. Residue Ser198 coordinates Ca(2+). A Mn(2+)-binding site is contributed by Asp203. The Ca(2+) site is built by Asp215, Thr217, and Asp222. Residue Asn241 is glycosylated (N-linked (GlcNAc...) asparagine).

Belongs to the peroxidase family. Ligninase subfamily. It depends on heme b as a cofactor. Ca(2+) is required as a cofactor.

It localises to the secreted. It carries out the reaction 2 Mn(2+) + H2O2 + 2 H(+) = 2 Mn(3+) + 2 H2O. In terms of biological role, catalyzes the oxidation of Mn(2+) to Mn(3+). The latter, acting as a diffusible redox mediator, is capable of oxidizing a variety of lignin compounds. The chain is Manganese peroxidase 2 (mnp2) from Phlebia radiata (White-rot fungus).